The following is a 133-amino-acid chain: ATP synthase epsilon chain, chloroplastic (133 aa).

Belongs to the ATPase epsilon chain family. As to quaternary structure, F-type ATPases have 2 components, CF(1) - the catalytic core - and CF(0) - the membrane proton channel. CF(1) has five subunits: alpha(3), beta(3), gamma(1), delta(1), epsilon(1). CF(0) has three main subunits: a, b and c.

It is found in the plastid. It localises to the chloroplast thylakoid membrane. Produces ATP from ADP in the presence of a proton gradient across the membrane. In Mesostigma viride (Green alga), this protein is ATP synthase epsilon chain, chloroplastic.